Reading from the N-terminus, the 166-residue chain is Large ribosomal subunit protein uL10 (166 aa).

Belongs to the universal ribosomal protein uL10 family. Part of the ribosomal stalk of the 50S ribosomal subunit. The N-terminus interacts with L11 and the large rRNA to form the base of the stalk. The C-terminus forms an elongated spine to which L12 dimers bind in a sequential fashion forming a multimeric L10(L12)X complex.

Functionally, forms part of the ribosomal stalk, playing a central role in the interaction of the ribosome with GTP-bound translation factors. In Stutzerimonas stutzeri (strain A1501) (Pseudomonas stutzeri), this protein is Large ribosomal subunit protein uL10.